Reading from the N-terminus, the 163-residue chain is Intron-encoded endonuclease I-PpoI (163 aa).

Homodimer. Requires Zn(2+) as cofactor.

Its function is as follows. Mediates the homing of a group I intron in the ribosomal DNA. Makes a four-base staggered cut in its ribosomal DNA target sequence. The protein is Intron-encoded endonuclease I-PpoI of Physarum polycephalum (Slime mold).